The primary structure comprises 220 residues: Large ribosomal subunit protein uL3 (220 aa).

The segment at 61-81 (KGSKSNKYANKPAEGHAKKAD) is disordered.

The protein belongs to the universal ribosomal protein uL3 family. Part of the 50S ribosomal subunit. Forms a cluster with proteins L14 and L19.

Its function is as follows. One of the primary rRNA binding proteins, it binds directly near the 3'-end of the 23S rRNA, where it nucleates assembly of the 50S subunit. The protein is Large ribosomal subunit protein uL3 of Staphylococcus epidermidis (strain ATCC 35984 / DSM 28319 / BCRC 17069 / CCUG 31568 / BM 3577 / RP62A).